The chain runs to 428 residues: Ribosomal RNA small subunit methyltransferase B (428 aa).

Residues 253–259 (CAAPGGK), aspartate 276, aspartate 302, and aspartate 321 each bind S-adenosyl-L-methionine. The active-site Nucleophile is cysteine 374.

This sequence belongs to the class I-like SAM-binding methyltransferase superfamily. RsmB/NOP family.

It localises to the cytoplasm. The enzyme catalyses cytidine(967) in 16S rRNA + S-adenosyl-L-methionine = 5-methylcytidine(967) in 16S rRNA + S-adenosyl-L-homocysteine + H(+). Specifically methylates the cytosine at position 967 (m5C967) of 16S rRNA. This is Ribosomal RNA small subunit methyltransferase B from Enterobacter sp. (strain 638).